The sequence spans 481 residues: Protein nucleotidyltransferase YdiU (481 aa).

The ATP site is built by glycine 87, glycine 89, arginine 90, lysine 110, aspartate 122, glycine 123, arginine 173, and arginine 180. Aspartate 249 serves as the catalytic Proton acceptor. Asparagine 250 and aspartate 259 together coordinate Mg(2+). An ATP-binding site is contributed by aspartate 259.

It belongs to the SELO family. Mg(2+) is required as a cofactor. Requires Mn(2+) as cofactor.

The catalysed reaction is L-seryl-[protein] + ATP = 3-O-(5'-adenylyl)-L-seryl-[protein] + diphosphate. The enzyme catalyses L-threonyl-[protein] + ATP = 3-O-(5'-adenylyl)-L-threonyl-[protein] + diphosphate. It catalyses the reaction L-tyrosyl-[protein] + ATP = O-(5'-adenylyl)-L-tyrosyl-[protein] + diphosphate. It carries out the reaction L-histidyl-[protein] + UTP = N(tele)-(5'-uridylyl)-L-histidyl-[protein] + diphosphate. The catalysed reaction is L-seryl-[protein] + UTP = O-(5'-uridylyl)-L-seryl-[protein] + diphosphate. The enzyme catalyses L-tyrosyl-[protein] + UTP = O-(5'-uridylyl)-L-tyrosyl-[protein] + diphosphate. Its function is as follows. Nucleotidyltransferase involved in the post-translational modification of proteins. It can catalyze the addition of adenosine monophosphate (AMP) or uridine monophosphate (UMP) to a protein, resulting in modifications known as AMPylation and UMPylation. The chain is Protein nucleotidyltransferase YdiU from Mycobacterium sp. (strain KMS).